Reading from the N-terminus, the 430-residue chain is Enolase (430 aa).

A (2R)-2-phosphoglycerate-binding site is contributed by glutamine 163. Catalysis depends on glutamate 205, which acts as the Proton donor. Aspartate 242, glutamate 285, and aspartate 312 together coordinate Mg(2+). Lysine 337, arginine 366, serine 367, and lysine 388 together coordinate (2R)-2-phosphoglycerate. Catalysis depends on lysine 337, which acts as the Proton acceptor.

The protein belongs to the enolase family. Mg(2+) serves as cofactor.

Its subcellular location is the cytoplasm. The protein localises to the secreted. The protein resides in the cell surface. It carries out the reaction (2R)-2-phosphoglycerate = phosphoenolpyruvate + H2O. Its pathway is carbohydrate degradation; glycolysis; pyruvate from D-glyceraldehyde 3-phosphate: step 4/5. Catalyzes the reversible conversion of 2-phosphoglycerate (2-PG) into phosphoenolpyruvate (PEP). It is essential for the degradation of carbohydrates via glycolysis. This chain is Enolase, found in Rubrobacter xylanophilus (strain DSM 9941 / JCM 11954 / NBRC 16129 / PRD-1).